Reading from the N-terminus, the 230-residue chain is Leucyl/phenylalanyl-tRNA--protein transferase (230 aa).

The protein belongs to the L/F-transferase family.

It localises to the cytoplasm. The catalysed reaction is N-terminal L-lysyl-[protein] + L-leucyl-tRNA(Leu) = N-terminal L-leucyl-L-lysyl-[protein] + tRNA(Leu) + H(+). It catalyses the reaction N-terminal L-arginyl-[protein] + L-leucyl-tRNA(Leu) = N-terminal L-leucyl-L-arginyl-[protein] + tRNA(Leu) + H(+). It carries out the reaction L-phenylalanyl-tRNA(Phe) + an N-terminal L-alpha-aminoacyl-[protein] = an N-terminal L-phenylalanyl-L-alpha-aminoacyl-[protein] + tRNA(Phe). Its function is as follows. Functions in the N-end rule pathway of protein degradation where it conjugates Leu, Phe and, less efficiently, Met from aminoacyl-tRNAs to the N-termini of proteins containing an N-terminal arginine or lysine. This chain is Leucyl/phenylalanyl-tRNA--protein transferase, found in Hamiltonella defensa subsp. Acyrthosiphon pisum (strain 5AT).